We begin with the raw amino-acid sequence, 439 residues long: MMADEELGDEVKVFRRDEDADDDPMISGETSEQQLADDKKDAVMEAELDGAGRVPLIGGLKAEIKAEPSPSFPMPSMLPCGPYSPFSGLPIMFPMVVPQYLSPNPNINMMNMMTMRAAMAGAPLSPAFPAMFSPNPLFPFPGVVAKQHLENTMPMHMRAGPLSSLNHMKMPPYMPHQMMPQHNERRGHGGGKVKKEDHIKKPLNAFMWYMKENRPKLLEEVGNDQKQSAELNKELGKRWHDLPKEEQQKYFEMAKKDRESHKEKYPQWSARENYAVNKKKPKRKRDKSVVSGSENNDQKKCRARFGVTNTSMWCKPCQRKKKCIYATDRSGSELNDGHDGRGTSGGCSSSSESSSPNNNQPMPMNAPQTVAAMHAMLMGMQIGQSAHLASSHSTGSSGTSPPVANPSDSESDVDEDEDIDPTITQQTQEYIMQESVCTL.

The tract at residues 1-38 is disordered; that stretch reads MMADEELGDEVKVFRRDEDADDDPMISGETSEQQLADD. The segment covering 9 to 18 has biased composition (basic and acidic residues); that stretch reads DEVKVFRRDE. Positions 87 to 138 are involved in nuclear asymmetry; sequence SGLPIMFPMVVPQYLSPNPNINMMNMMTMRAAMAGAPLSPAFPAMFSPNPLF. A Phosphoserine; by LIT1 modification is found at Ser-125. The HMG box DNA-binding region spans 199 to 269; the sequence is IKKPLNAFMW…SHKEKYPQWS (71 aa). The segment covering 254–265 has biased composition (basic and acidic residues); it reads AKKDRESHKEKY. 3 disordered regions span residues 254-298, 329-365, and 385-439; these read AKKD…NNDQ, RSGS…MPMN, and SAHL…VCTL. A compositionally biased stretch (basic residues) spans 277–286; it reads NKKKPKRKRD. 2 stretches are compositionally biased toward low complexity: residues 346–365 and 385–400; these read GCSS…MPMN and SAHL…SGTS. A compositionally biased stretch (acidic residues) spans 409–420; the sequence is SESDVDEDEDID. Polar residues predominate over residues 422–439; that stretch reads TITQQTQEYIMQESVCTL.

Belongs to the TCF/LEF family. Interacts with hda-1. Interacts with bar-1. Interacts with par-5; the interaction is direct and is enhanced by lit-1-mediated pop-1 phosphorylation. The interaction also leads to the subsequent nuclear export of pop-1. Interacts (when phosphorylated on Ser-125) with lit-1; the interaction is dependent on the beta-catenin-lit-1 complex. Interacts with wrm-1. Post-translationally, phosphorylated on Ser-125 by lit-1 in the beta-catenin-lit-1 complex. Phosphorylation promotes the interaction of pop-1 and par-5 and the subsequent translocation of pop-1 from the nucleus to the cytoplasm.

It localises to the nucleus. It is found in the cytoplasm. Part of the Wnt signaling pathway essential for the specification of the mesodermal cell fate in early embryos. Required for asymmetrical division of somatic gonadal precursor descendants which initiate axis formation required to control organ shape. Similarly, involved in asymmetrical division of seam cells, a stem cell-like lineage. Represses expression of target genes via its interaction with hda-1 histone deacetylase. Required for specification of the M lineage-derived coelomocyte and sex myoblast fate. Regulates coelomocyte fate by positively regulating proliferation and ceh-34 and possibly eya-1 expression in M.dlpa and M.drpa precursors. This is Protein pop-1 from Caenorhabditis briggsae.